The chain runs to 155 residues: Peptide deformylase 2 (155 aa).

Residues C90 and H132 each contribute to the Fe cation site. Residue E133 is part of the active site. A Fe cation-binding site is contributed by H136.

This sequence belongs to the polypeptide deformylase family. Fe(2+) is required as a cofactor.

The enzyme catalyses N-terminal N-formyl-L-methionyl-[peptide] + H2O = N-terminal L-methionyl-[peptide] + formate. Functionally, removes the formyl group from the N-terminal Met of newly synthesized proteins. Requires at least a dipeptide for an efficient rate of reaction. N-terminal L-methionine is a prerequisite for activity but the enzyme has broad specificity at other positions. The polypeptide is Peptide deformylase 2 (Clostridium perfringens (strain 13 / Type A)).